Consider the following 250-residue polypeptide: Golgi SNAP receptor complex member 1 (250 aa).

Ala2 bears the N-acetylalanine mark. The Cytoplasmic portion of the chain corresponds to Ala2 to Asp229. Residues Trp9 to Phe30 are a coiled coil. Positions Ser38 to Asn59 are disordered. Basic and acidic residues predominate over residues Ser41–Ser51. Positions Glu68 to Ala95 form a coiled coil. The residue at position 141 (Ser141) is a Phosphoserine. Residues Ser230 to His250 traverse the membrane as a helical; Anchor for type IV membrane protein segment.

Belongs to the GOSR1 family. In terms of assembly, component of several multiprotein Golgi SNARE complexes. Identified in a SNARE complex with BET1, STX5 and YKT6, in a SNARE complex with BET1L, STX5 and YKT6, in a SNARE complex with STX5, GOSR2, SEC22B and BET1, and in complex with STX5 and COG3. Interacts with GABARAPL2.

It localises to the golgi apparatus membrane. Functionally, involved in transport from the ER to the Golgi apparatus as well as in intra-Golgi transport. It belongs to a super-family of proteins called t-SNAREs or soluble NSF (N-ethylmaleimide-sensitive factor) attachment protein receptor. May play a protective role against hydrogen peroxide induced cytotoxicity under glutathione depleted conditions in neuronal cells by regulating the intracellular ROS levels via inhibition of p38 MAPK (MAPK11, MAPK12, MAPK13 and MAPK14). Participates in docking and fusion stage of ER to cis-Golgi transport. Plays an important physiological role in VLDL-transport vesicle-Golgi fusion and thus in VLDL delivery to the hepatic cis-Golgi. The polypeptide is Golgi SNAP receptor complex member 1 (GOSR1) (Cricetulus griseus (Chinese hamster)).